Reading from the N-terminus, the 389-residue chain is Capreomycidine synthase (389 aa).

N6-(pyridoxal phosphate)lysine is present on K230.

It belongs to the class-II pyridoxal-phosphate-dependent aminotransferase family. Requires pyridoxal 5'-phosphate as cofactor.

The catalysed reaction is (2S,3S)-hydroxyarginine = (2S,3R)-capreomycidine + H2O. The protein operates within antibiotic biosynthesis. Its function is as follows. Involved in the biosynthesis of capreomycidine, an unusual amino acid used by non-ribosomal peptide synthases (NRPS) to make the tuberactinomycin class of peptide antibiotic such as viomycin and capreomycin. Catalyzes the dehydration of the C3 hydroxyl of (3S)-hydroxy-(2S)-arginine and the intramolecular cyclization to yield (2S,3R)-capreomycidine. This is Capreomycidine synthase from Streptomyces vinaceus.